The sequence spans 476 residues: Glutamate--tRNA ligase (476 aa).

Residues 9–19 carry the 'HIGH' region motif; that stretch reads PSPTGTLHLGT. The 'KMSKS' region signature appears at 248-252; the sequence is KLSKR. K251 lines the ATP pocket.

It belongs to the class-I aminoacyl-tRNA synthetase family. Glutamate--tRNA ligase type 1 subfamily. Monomer.

Its subcellular location is the cytoplasm. The catalysed reaction is tRNA(Glu) + L-glutamate + ATP = L-glutamyl-tRNA(Glu) + AMP + diphosphate. Catalyzes the attachment of glutamate to tRNA(Glu) in a two-step reaction: glutamate is first activated by ATP to form Glu-AMP and then transferred to the acceptor end of tRNA(Glu). The chain is Glutamate--tRNA ligase from Prochlorococcus marinus (strain NATL1A).